The chain runs to 301 residues: Protein FdhE homolog (301 aa).

The protein belongs to the FdhE family.

It is found in the cytoplasm. In terms of biological role, necessary for formate dehydrogenase activity. In Shewanella baltica (strain OS223), this protein is Protein FdhE homolog.